The following is a 478-amino-acid chain: Ribosomal RNA small subunit methyltransferase F (478 aa).

S-adenosyl-L-methionine contacts are provided by residues 123 to 129 (AAAPGSK), Glu147, Asp174, and Asp192. Residue Cys245 is the Nucleophile of the active site.

This sequence belongs to the class I-like SAM-binding methyltransferase superfamily. RsmB/NOP family.

The protein localises to the cytoplasm. The enzyme catalyses cytidine(1407) in 16S rRNA + S-adenosyl-L-methionine = 5-methylcytidine(1407) in 16S rRNA + S-adenosyl-L-homocysteine + H(+). Its function is as follows. Specifically methylates the cytosine at position 1407 (m5C1407) of 16S rRNA. This is Ribosomal RNA small subunit methyltransferase F from Vibrio campbellii (strain ATCC BAA-1116).